We begin with the raw amino-acid sequence, 270 residues long: Flagellar hook-basal body complex protein FlhO (270 aa).

The protein belongs to the flagella basal body rod proteins family.

Not required for motility. The protein is Flagellar hook-basal body complex protein FlhO (flhO) of Bacillus subtilis (strain 168).